Consider the following 145-residue polypeptide: UPF0260 protein VS_0923 (145 aa).

It belongs to the UPF0260 family.

This Vibrio atlanticus (strain LGP32) (Vibrio splendidus (strain Mel32)) protein is UPF0260 protein VS_0923.